The primary structure comprises 301 residues: tRNA uridine(34) hydroxylase (301 aa).

The region spanning 121-212 (NDKDTLVLDS…YLKNIKKKES (92 aa)) is the Rhodanese domain. Cys-172 functions as the Cysteine persulfide intermediate in the catalytic mechanism.

The protein belongs to the TrhO family.

It catalyses the reaction uridine(34) in tRNA + AH2 + O2 = 5-hydroxyuridine(34) in tRNA + A + H2O. Its function is as follows. Catalyzes oxygen-dependent 5-hydroxyuridine (ho5U) modification at position 34 in tRNAs. This Pelagibacter ubique (strain HTCC1062) protein is tRNA uridine(34) hydroxylase.